The chain runs to 110 residues: Large ribosomal subunit protein uL22 (110 aa).

It belongs to the universal ribosomal protein uL22 family. As to quaternary structure, part of the 50S ribosomal subunit.

Its function is as follows. This protein binds specifically to 23S rRNA; its binding is stimulated by other ribosomal proteins, e.g. L4, L17, and L20. It is important during the early stages of 50S assembly. It makes multiple contacts with different domains of the 23S rRNA in the assembled 50S subunit and ribosome. Functionally, the globular domain of the protein is located near the polypeptide exit tunnel on the outside of the subunit, while an extended beta-hairpin is found that lines the wall of the exit tunnel in the center of the 70S ribosome. The polypeptide is Large ribosomal subunit protein uL22 (Saccharophagus degradans (strain 2-40 / ATCC 43961 / DSM 17024)).